Consider the following 417-residue polypeptide: Cytoplasmic tRNA 2-thiolation protein 2 (417 aa).

Acidic residues predominate over residues 1-11 (MCSIVEDDFGD). Residues 1–24 (MCSIVEDDFGDEGGAHAMKEDTPQ) are disordered. Basic and acidic residues predominate over residues 13 to 22 (GGAHAMKEDT).

It belongs to the CTU2/NCS2 family.

It localises to the cytoplasm. Its pathway is tRNA modification; 5-methoxycarbonylmethyl-2-thiouridine-tRNA biosynthesis. Its function is as follows. Plays a central role in 2-thiolation of mcm(5)S(2)U at tRNA wobble positions of tRNA(Lys), tRNA(Glu) and tRNA(Gln). May act by forming a heterodimer with NCS6/CTU1 that ligates sulfur from thiocarboxylated URM1 onto the uridine of tRNAs at wobble position. The chain is Cytoplasmic tRNA 2-thiolation protein 2 from Anopheles gambiae (African malaria mosquito).